The chain runs to 200 residues: MTNLDNNNLNEEIKNKLEKQQNQKEQKLIIVIMGVSGSGKTTIGNAIASSLGCGFNDADEFHSEENKEKMRSGIPLNDDDRKPWLSSINKRMIEFLNNENDGANDHVFTCSALKSTYRDQISNNINKDNLLFILLQGSKQLLSERLQNRKNHFFNPNLLDSQLSILELPTQSELSNHHYAFIDISNSVDEIVEEIFNYLK.

Position 34 to 41 (34 to 41 (GVSGSGKT)) interacts with ATP.

This sequence belongs to the gluconokinase GntK/GntV family.

The catalysed reaction is D-gluconate + ATP = 6-phospho-D-gluconate + ADP + H(+). The protein operates within carbohydrate acid metabolism; D-gluconate degradation. The sequence is that of Probable gluconokinase from Dictyostelium discoideum (Social amoeba).